Reading from the N-terminus, the 387-residue chain is Polyadenylate-binding protein RBP45A (387 aa).

RRM domains follow at residues 60-140 (KSLW…WAQA), 154-233 (HTIF…PAAN), and 260-332 (TTIF…WGRS). Positions 329–342 (WGRSPNKQSDQAQW) are enriched in polar residues. Positions 329 to 387 (WGRSPNKQSDQAQWNGGGYYGYPPQPQGGYGYAAQPPTQDPNAYYGGYTGYGNYQQQRQ) are disordered.

It belongs to the polyadenylate-binding RBP45 family. Interacts with the poly(A) tail of mRNA in nucleus. In terms of tissue distribution, mostly expressed in seedlings, and, to a lower extent, in leaves, stems, and flowers. Present in immature anther tissues (tapetum cells) and mature pollen grains.

It localises to the nucleus. Functionally, heterogeneous nuclear ribonucleoprotein (hnRNP)-protein binding the poly(A) tail of mRNA and probably involved in some steps of pre-mRNA maturation. This chain is Polyadenylate-binding protein RBP45A (RBP45A), found in Arabidopsis thaliana (Mouse-ear cress).